A 401-amino-acid chain; its full sequence is 8-amino-7-oxononanoate synthase (401 aa).

A substrate-binding site is contributed by Arg-24. 111–112 is a binding site for pyridoxal 5'-phosphate; it reads GF. His-137 serves as a coordination point for substrate. Pyridoxal 5'-phosphate contacts are provided by Ser-183, His-211, and Thr-240. Lys-243 carries the post-translational modification N6-(pyridoxal phosphate)lysine. Thr-357 is a binding site for substrate.

The protein belongs to the class-II pyridoxal-phosphate-dependent aminotransferase family. BioF subfamily. As to quaternary structure, homodimer. The cofactor is pyridoxal 5'-phosphate.

The catalysed reaction is 6-carboxyhexanoyl-[ACP] + L-alanine + H(+) = (8S)-8-amino-7-oxononanoate + holo-[ACP] + CO2. Its pathway is cofactor biosynthesis; biotin biosynthesis. Functionally, catalyzes the decarboxylative condensation of pimeloyl-[acyl-carrier protein] and L-alanine to produce 8-amino-7-oxononanoate (AON), [acyl-carrier protein], and carbon dioxide. This chain is 8-amino-7-oxononanoate synthase, found in Xanthomonas campestris pv. campestris (strain 8004).